The following is a 471-amino-acid chain: Nuclear receptor subfamily 0 group B member 1 (471 aa).

3 repeat units span residues 1–67 (MAGE…YRCC), 68–134 (FCGE…YRCC), and 135–201 (FCGE…YRCC). Residues 1-253 (MAGEDHQWQG…QRVALKSPQV (253 aa)) are 4 X 67 AA tandem repeats. 3 consecutive short sequence motifs (LXXLL motif) follow at residues 13-17 (LYNML), 80-84 (LYNML), and 147-151 (LYSLL). The stretch at 202–253 (FCGEDHPRQSGILCNMPMSAKQTHVAPEAQPGAPWWDPSCAAQRVALKSPQV) is one 4; truncated repeat. Residues 210–470 (QSGILCNMPM…DMMLEMLCAK (261 aa)) enclose the NR LBD domain. The short motif at 462–467 (MMLEML) is the AF-2 motif element.

This sequence belongs to the nuclear hormone receptor family. NR0 subfamily. As to quaternary structure, homodimer. Interacts with NR5A1, NR5A2, NR0B2 and with COPS2. Interacts with ESRRB; represses ESRRB activity at the GATA6 promoter.

The protein resides in the nucleus. The protein localises to the cytoplasm. Nuclear receptor that lacks a DNA-binding domain and acts as a corepressor that inhibits the transcriptional activity of other nuclear receptors through heterodimeric interactions. Component of a cascade required for the development of the hypothalamic-pituitary-adrenal-gonadal axis. May also have a role in the development of the embryo and in the maintenance of embryonic stem cell pluripotency. This Sus scrofa (Pig) protein is Nuclear receptor subfamily 0 group B member 1 (NR0B1).